Here is a 207-residue protein sequence, read N- to C-terminus: ADP-ribosylation factor (207 aa).

The N-myristoyl glycine moiety is linked to residue glycine 2. Residues 32–39, 75–79, and 133–136 each bind GTP; these read GLDGAGKT, DIGGQ, and NKID.

This sequence belongs to the small GTPase superfamily. Arf family.

It is found in the golgi apparatus. In terms of biological role, GTP-binding protein involved in protein trafficking; may modulate vesicle budding and uncoating within the Golgi apparatus. The sequence is that of ADP-ribosylation factor (ARF-1) from Encephalitozoon cuniculi (strain GB-M1) (Microsporidian parasite).